A 341-amino-acid chain; its full sequence is Ribulose-5-phosphate reductase 1 (341 aa).

Residues cysteine 38, histidine 64, glutamate 65, and glutamate 144 each coordinate Zn(2+).

The protein belongs to the zinc-containing alcohol dehydrogenase family. Heterodimer together with TarI. Can also form a dimer of heterodimers. The cofactor is Zn(2+).

The catalysed reaction is D-ribitol 5-phosphate + NADP(+) = D-ribulose 5-phosphate + NADPH + H(+). It functions in the pathway cell wall biogenesis; poly(ribitol phosphate) teichoic acid biosynthesis. Catalyzes the NADPH dependent reduction of D-ribulose 5-phosphate to D-ribitol 5-phosphate. The polypeptide is Ribulose-5-phosphate reductase 1 (Staphylococcus aureus (strain NCTC 8325 / PS 47)).